The sequence spans 1242 residues: Structural polyprotein (1242 aa).

The tract at residues 1-36 (MFPYPTLNYSPMAPVNPMAYRDPNPPRRRWRPFRPP) is necessary for nucleocapsid assembly and virus assembly. The interval 1 to 104 (MFPYPTLNYS…KQKPGKRQRM (104 aa)) is disordered. Residues 37-70 (LAAQIEDLRRSIANLTFKQRAPNPPAGPPAKRKK) form a host transcription inhibition region. Residues 44-51 (LRRSIANL) carry the Supraphysiological nuclear export signal motif. Positions 66–104 (AKRKKPAPKPKPAAPKKKRQPPPAKKQKRKQKPGKRQRM) are enriched in basic residues. The Nuclear localization signal motif lies at 67-70 (KRKK). The interval 83–113 (KRQPPPAKKQKRKQKPGKRQRMCMKLESDKT) is binding to the viral RNA. The tract at residues 98-112 (PGKRQRMCMKLESDK) is ribosome-binding. S110 bears the Phosphoserine mark. Residues 112 to 261 (KTFPILLNGQ…KDTPEGSEPW (150 aa)) form the Peptidase S3 domain. The residue at position 113 (T113) is a Phosphothreonine. Residues H138, D160, and S212 each act as charge relay system in the active site. The functions as an uncleaved signal peptide for the precursor of protein E3/E2 stretch occupies residues 262–273 (SLTTVMCVLANI). N-linked (GlcNAc...) asparagine; by host glycosylation occurs at N272. Topologically, residues 325 to 688 (DLETHFTQYK…YYYNRYPMTT (364 aa)) are extracellular. The chain crosses the membrane as a helical span at residues 689–709 (IVGLCTCAAIIMVSCITSVWL). Residues 710 to 744 (LCRTRNLCITPYRLAPNAQVPILLAVLCCVKPTRA) are Cytoplasmic-facing. Residues C717, C737, and C738 are each lipidated (S-palmitoyl cysteine; by host). Positions 717-737 (CITPYRLAPNAQVPILLAVLC) are transient transmembrane before p62-6K protein processing. At 745–759 (DDTLQVLNYLWNNNQ) the chain is on the extracellular side. The next 2 helical transmembrane spans lie at 760-780 (NFFWMQTLIPLAALIVCMRML) and 781-801 (RCLLCCGPAFLLVCGALGAAA). Over 802 to 1218 (YEHTAVMPNK…WSWLKVLVGS (417 aa)) the chain is Extracellular. Cystine bridges form between C850–C915, C863–C895, C864–C897, C869–C879, C1061–C1073, C1103–C1178, C1108–C1182, and C1130–C1172. The E1 fusion peptide loop stretch occupies residues 885-902 (VYPFMWGGAYCFCDTENT). The helical transmembrane segment at 1219-1239 (TSAFIVLGLIATAVVALVLFT) threads the bilayer. Residues 1240 to 1242 (HKH) lie on the Cytoplasmic side of the membrane.

Part of a tetrameric complex composed of host CRM1, host importin alpha/beta dimer and the viral capsid; this complex blocks the receptor-mediated transport through the nuclear pore. Interacts with host phosphatase PPP1CA; this interaction dephosphorylates the capsid protein, which increases its ability to bind to the viral genome. Interacts with host karyopherin KPNA4; this interaction allows the nuclear import of the viral capsid protein. Interacts with spike glycoprotein E2. Interacts with host IRAK1; the interaction leads to inhibition of IRAK1-dependent signaling. As to quaternary structure, the precursor of protein E3/E2 and E1 form a heterodimer shortly after synthesis. In terms of assembly, the precursor of protein E3/E2 and E1 form a heterodimer shortly after synthesis. Processing of the precursor of protein E3/E2 into E2 and E3 results in a heterodimer of the spike glycoproteins E2 and E1. Spike at virion surface are constituted of three E2-E1 heterodimers. After target cell attachment and endocytosis, E1 change conformation to form homotrimers. Interacts with 6K protein. Processing of the precursor of protein E3/E2 into E2 and E3 results in a heterodimer of the spike glycoproteins E2 and E1. Spike at virion surface are constituted of three E2-E1 heterodimers. Interacts with 6K protein. As to quaternary structure, interacts with spike glycoprotein E1. Interacts with spike glycoprotein E2. In terms of processing, structural polyprotein: Specific enzymatic cleavages in vivo yield mature proteins. Capsid protein is auto-cleaved during polyprotein translation, unmasking a signal peptide at the N-terminus of the precursor of E3/E2. The remaining polyprotein is then targeted to the host endoplasmic reticulum, where host signal peptidase cleaves it into pE2, 6K and E1 proteins. pE2 is further processed to mature E3 and E2 by host furin in trans-Golgi vesicle. Phosphorylated on serine and threonine residues. Post-translationally, palmitoylated via thioester bonds. These palmitoylations may induce disruption of the C-terminus transmembrane. This would result in the reorientation of E2 C-terminus from lumenal to cytoplasmic side. In terms of processing, N-glycosylated. Palmitoylated via thioester bonds.

The protein localises to the virion. Its subcellular location is the host cytoplasm. It is found in the host cell membrane. It localises to the host nucleus. The protein resides in the virion membrane. It catalyses the reaction Autocatalytic release of the core protein from the N-terminus of the togavirus structural polyprotein by hydrolysis of a -Trp-|-Ser- bond.. Its function is as follows. Forms an icosahedral capsid with a T=4 symmetry composed of 240 copies of the capsid protein surrounded by a lipid membrane through which penetrate 80 spikes composed of trimers of E1-E2 heterodimers. The capsid protein binds to the viral RNA genome at a site adjacent to a ribosome binding site for viral genome translation following genome release. Possesses a protease activity that results in its autocatalytic cleavage from the nascent structural protein. Following its self-cleavage, the capsid protein transiently associates with ribosomes, and within several minutes the protein binds to viral RNA and rapidly assembles into icosahedric core particles. The resulting nucleocapsid eventually associates with the cytoplasmic domain of the spike glycoprotein E2 at the cell membrane, leading to budding and formation of mature virions. In case of infection, new virions attach to target cells and after clathrin-mediated endocytosis their membrane fuses with the host endosomal membrane. This leads to the release of the nucleocapsid into the cytoplasm, followed by an uncoating event necessary for the genomic RNA to become accessible. The uncoating might be triggered by the interaction of capsid proteins with ribosomes. Binding of ribosomes would release the genomic RNA since the same region is genomic RNA-binding and ribosome-binding. Specifically inhibits interleukin-1 receptor-associated kinase 1/IRAK1-dependent signaling during viral entry, representing a means by which the alphaviruses may evade innate immune detection and activation prior to viral gene expression. Inhibits host transcription. Forms a tetrameric complex with XPO1/CRM1 and the nuclear import receptor importin. This complex blocks the central channel of host nuclear pores thereby inhibiting the receptor-mediated nuclear transport and thus the host mRNA and rRNA transcription. The inhibition of transcription is linked to a cytopathic effect on the host cell. In terms of biological role, provides the signal sequence for the translocation of the precursor of protein E3/E2 to the host endoplasmic reticulum. Furin-cleaved E3 remains associated with spike glycoprotein E1 and mediates pH protection of the latter during the transport via the secretory pathway. After virion release from the host cell, the assembly protein E3 is gradually released in the extracellular space. Plays a role in viral attachment to target host cell, by binding to the cell receptor. Synthesized as a p62 precursor which is processed by furin at the cell membrane just before virion budding, giving rise to E2-E1 heterodimer. The p62-E1 heterodimer is stable, whereas E2-E1 is unstable and dissociate at low pH. p62 is processed at the last step, presumably to avoid E1 fusion activation before its final export to cell surface. E2 C-terminus contains a transitory transmembrane that would be disrupted by palmitoylation, resulting in reorientation of the C-terminal tail from lumenal to cytoplasmic side. This step is critical since E2 C-terminus is involved in budding by interacting with capsid proteins. This release of E2 C-terminus in cytoplasm occurs lately in protein export, and precludes premature assembly of particles at the endoplasmic reticulum membrane. Functionally, constitutive membrane protein involved in virus glycoprotein processing, cell permeabilization, and the budding of viral particles. Disrupts the calcium homeostasis of the cell, probably at the endoplasmic reticulum level. This leads to cytoplasmic calcium elevation. Because of its lipophilic properties, the 6K protein is postulated to influence the selection of lipids that interact with the transmembrane domains of the glycoproteins, which, in turn, affects the deformability of the bilayer required for the extreme curvature that occurs as budding proceeds. Present in low amount in virions, about 3% compared to viral glycoproteins. Its function is as follows. Class II viral fusion protein. Fusion activity is inactive as long as E1 is bound to E2 in mature virion. After virus attachment to target cell and endocytosis, acidification of the endosome would induce dissociation of E1/E2 heterodimer and concomitant trimerization of the E1 subunits. This E1 trimer is fusion active, and promotes release of viral nucleocapsid in cytoplasm after endosome and viral membrane fusion. Efficient fusion requires the presence of cholesterol and sphingolipid in the target membrane. Fusion is optimal at levels of about 1 molecule of cholesterol per 2 molecules of phospholipids, and is specific for sterols containing a 3-beta-hydroxyl group. The protein is Structural polyprotein of Aedes (Human).